A 310-amino-acid chain; its full sequence is MENLPTTYDGPVHIAVIGGTGLSKLEGYVPVAALNPTTPWGSPSSPLMIFEHNGHAVAFLARHGLYHQLAPHEVPARANIAALRSIGVRTIIAFSAVGSLREEIKPMDFVIPDQIIDRTKGIRPFTFYEGGVVGHVGFADPFDAGLAQVVEKCASAMKGDGVVLHNKGTIICMEGPAFSTRAESHMYRSWGGSVINMSALPEAKLAREAELAYQMICMATDYDCWRDEAGEDVDVAMVMKYMAANGENAKHLVGAVLDELLKQDNSDLVLAKKWQGSAQGAVKFMTKPEGRDPEAMKRVEFLFPGFWEQN.

Phosphate is bound by residues T20, R62–H63, and S95–A96. M197 contributes to the substrate binding site. S198 provides a ligand contact to phosphate. Residue D221–D223 coordinates substrate.

The protein belongs to the PNP/MTAP phosphorylase family. MTAP subfamily. In terms of assembly, homotrimer.

Its subcellular location is the cytoplasm. The protein resides in the nucleus. The enzyme catalyses S-methyl-5'-thioadenosine + phosphate = 5-(methylsulfanyl)-alpha-D-ribose 1-phosphate + adenine. The protein operates within amino-acid biosynthesis; L-methionine biosynthesis via salvage pathway; S-methyl-5-thio-alpha-D-ribose 1-phosphate from S-methyl-5'-thioadenosine (phosphorylase route): step 1/1. Functionally, catalyzes the reversible phosphorylation of S-methyl-5'-thioadenosine (MTA) to adenine and 5-methylthioribose-1-phosphate. Involved in the breakdown of MTA, a major by-product of polyamine biosynthesis. Responsible for the first step in the methionine salvage pathway after MTA has been generated from S-adenosylmethionine. Has broad substrate specificity with 6-aminopurine nucleosides as preferred substrates. This Neurospora crassa (strain ATCC 24698 / 74-OR23-1A / CBS 708.71 / DSM 1257 / FGSC 987) protein is S-methyl-5'-thioadenosine phosphorylase.